A 1668-amino-acid chain; its full sequence is Zinc finger CCCH domain-containing protein 13 (1668 aa).

Disordered stretches follow at residues Met1–Ala38 and Thr56–Asn157. The span at Val10–Arg23 shows a compositional bias: polar residues. The C3H1-type zinc finger occupies Ser36–Ser64. A phosphoserine mark is found at Ser64 and Ser77. The segment covering Arg76 to Glu136 has biased composition (basic and acidic residues). Glycyl lysine isopeptide (Lys-Gly) (interchain with G-Cter in SUMO2) cross-links involve residues Lys179 and Lys194. Disordered stretches follow at residues Glu190 to Ala1112 and Ala1125 to Asp1466. Ser198, Ser207, Ser209, and Ser211 each carry phosphoserine. Residues Ser204–Arg213 are compositionally biased toward low complexity. A compositionally biased stretch (basic residues) spans Lys214–Ser224. Phosphothreonine is present on Thr237. A phosphoserine mark is found at Ser238 and Ser242. The segment covering Ala239–Asn254 has biased composition (polar residues). Phosphothreonine is present on Thr263. The residue at position 265 (Ser265) is a Phosphoserine. A compositionally biased stretch (basic and acidic residues) spans Lys283–Arg315. A phosphoserine mark is found at Ser316, Ser318, Ser325, and Ser328. Positions His323–Ser346 are enriched in low complexity. Phosphothreonine occurs at positions 354 and 364. Phosphoserine occurs at positions 370, 372, and 381. The span at Ser370–Pro382 shows a compositional bias: low complexity. Basic and acidic residues-rich tracts occupy residues Pro394 to Arg434 and Ser442 to Ser575. Residues Asp584–His593 show a composition bias toward low complexity. Basic and acidic residues predominate over residues Asp594–Arg640. Residue Ser643 is modified to Phosphoserine. The stretch at Ile645–Asp789 forms a coiled coil. The segment covering Gly649–Lys821 has biased composition (basic and acidic residues). A phosphoserine mark is found at Ser831, Ser833, Ser837, Ser845, Ser848, Ser853, Ser873, Ser875, and Ser877. Residues Leu881–Lys957 are compositionally biased toward basic and acidic residues. Phosphothreonine is present on Thr882. Ser943 carries the post-translational modification Phosphoserine. The span at Lys958–Lys969 shows a compositional bias: basic residues. Positions Lys970–Asn981 are enriched in basic and acidic residues. Phosphoserine occurs at positions 986, 993, 1010, 1014, and 1017. The segment covering Lys996–Ser1010 has biased composition (basic residues). Thr1033 carries the phosphothreonine modification. Residues Pro1073–His1083 show a composition bias toward basic and acidic residues. Low complexity-rich tracts occupy residues Thr1084–Leu1100 and Ala1125–Asn1153. The span at Thr1163–Arg1188 shows a compositional bias: basic and acidic residues. Phosphothreonine is present on Thr1170. Phosphoserine is present on residues Ser1191, Ser1194, Ser1208, and Ser1210. The span at Ser1213 to Gly1223 shows a compositional bias: basic and acidic residues. A Phosphoserine modification is found at Ser1230. Composition is skewed to basic and acidic residues over residues Gly1231–Val1286 and Asp1294–Phe1379. Positions Gln1300 to Ser1366 form a coiled coil. 11 positions are modified to phosphoserine: Ser1364, Ser1366, Ser1382, Ser1386, Ser1406, Ser1409, Ser1438, Leu1453, Gly1456, Ser1465, and Asp1466. Basic and acidic residues-rich tracts occupy residues Ser1386 to Leu1421 and Glu1429 to Ser1438.

This sequence belongs to the ZC3H13 family. As to quaternary structure, component of the WMM complex, a N6-methyltransferase complex composed of a catalytic subcomplex, named MAC, and of an associated subcomplex, named MACOM. The MAC subcomplex is composed of METTL3 and METTL14. The MACOM subcomplex is composed of WTAP, ZC3H13, CBLL1/HAKAI, VIRMA, and, in some cases of RBM15 (RBM15 or RBM15B). Also a component of a MACOM-like complex, named WTAP complex, composed of WTAP, ZC3H13, CBLL1/HAKAI, VIRMA, RBM15, BCLAF1 and THRAP3.

The protein localises to the nucleus speckle. Its subcellular location is the nucleus. The protein resides in the nucleoplasm. In terms of biological role, associated component of the WMM complex, a complex that mediates N6-methyladenosine (m6A) methylation of RNAs, a modification that plays a role in the efficiency of mRNA splicing and RNA processing. Acts as a key regulator of m6A methylation by promoting m6A methylation of mRNAs at the 3'-UTR. Controls embryonic stem cells (ESCs) pluripotency via its role in m6A methylation. In the WMM complex, anchors component of the MACOM subcomplex in the nucleus. Also required for bridging WTAP to the RNA-binding component RBM15 (RBM15 or RBM15B). In Homo sapiens (Human), this protein is Zinc finger CCCH domain-containing protein 13.